The following is a 455-amino-acid chain: DNA repair protein RadA (455 aa).

The segment at 12–29 (CSECGSYSPKWLGQCPGC) adopts a C4-type zinc-finger fold. An ATP-binding site is contributed by 95-102 (GEPGIGKS). The short motif at 252–256 (KNRFG) is the RadA KNRFG motif element. The lon-protease-like stretch occupies residues 351–455 (DVFLSIAGGL…TIKDAVRLLQ (105 aa)).

Belongs to the RecA family. RadA subfamily.

Its function is as follows. DNA-dependent ATPase involved in processing of recombination intermediates, plays a role in repairing DNA breaks. Stimulates the branch migration of RecA-mediated strand transfer reactions, allowing the 3' invading strand to extend heteroduplex DNA faster. Binds ssDNA in the presence of ADP but not other nucleotides, has ATPase activity that is stimulated by ssDNA and various branched DNA structures, but inhibited by SSB. Does not have RecA's homology-searching function. This chain is DNA repair protein RadA, found in Chlamydia muridarum (strain MoPn / Nigg).